A 195-amino-acid polypeptide reads, in one-letter code: Probable GTP-binding protein EngB (195 aa).

One can recognise an EngB-type G domain in the interval Asp24–Leu195. GTP-binding positions include Gly32 to Ser39, Gly59 to Leu63, Asp77 to Gly80, Thr144 to Asp147, and Phe176 to Ser178. The Mg(2+) site is built by Ser39 and Thr61.

Belongs to the TRAFAC class TrmE-Era-EngA-EngB-Septin-like GTPase superfamily. EngB GTPase family. It depends on Mg(2+) as a cofactor.

Necessary for normal cell division and for the maintenance of normal septation. The polypeptide is Probable GTP-binding protein EngB (Lactococcus lactis subsp. lactis (strain IL1403) (Streptococcus lactis)).